We begin with the raw amino-acid sequence, 126 residues long: MRKQESEGANLEFESKSNDNGNVKIAPNDQSFLTILDDIKSSKSPAVINYGASWCGVCSQILPAFRKLSNSFSKLKFVYADIDECPETTRHIRYTPTFQFYRDGEKVDEMFGAGEQRLHDRLWLHS.

Positions 1–24 are disordered; sequence MRKQESEGANLEFESKSNDNGNVK. Residues 5 to 126 enclose the Thioredoxin domain; sequence ESEGANLEFE…RLHDRLWLHS (122 aa). Catalysis depends on nucleophile residues Cys55 and Cys58. A disulfide bond links Cys55 and Cys58.

The protein belongs to the thioredoxin family.

Probable thiol-disulfide oxidoreductase that may participate in various redox reactions. The protein is Thioredoxin-like 3-3 of Arabidopsis thaliana (Mouse-ear cress).